We begin with the raw amino-acid sequence, 372 residues long: Probable leucine aminopeptidase MCYG_08380 (372 aa).

An N-terminal signal peptide occupies residues 1–19 (MKVSVLAAVAAFAAATAIA). N-linked (GlcNAc...) asparagine glycosylation occurs at Asn96. His175 and Asp194 together coordinate Zn(2+). 2 N-linked (GlcNAc...) asparagine glycosylation sites follow: Asn195 and Asn219. 2 residues coordinate Zn(2+): Glu233 and Asp260. A disulfide bond links Cys305 and Cys309. His338 provides a ligand contact to Zn(2+).

This sequence belongs to the peptidase M28 family. M28E subfamily. In terms of assembly, monomer. It depends on Zn(2+) as a cofactor.

It localises to the secreted. In terms of biological role, probable extracellular aminopeptidase which contributes to pathogenicity. This is Probable leucine aminopeptidase MCYG_08380 from Arthroderma otae (strain ATCC MYA-4605 / CBS 113480) (Microsporum canis).